The chain runs to 216 residues: MKDQVIPKATARRLPLYYRYLRMLHDTGKNKVSSTELSEAVQVDSATIRRDFSYFGELGKRGYGYDVENLMNFFAKTLNEDELTNVALIGVGNLGSALLKYKFHQSNSIRVSCAFDVNEDIVGRIVDGIPVYPMEDMMEQIRVQQIEVAILTIPARKAQEVVNKLAEAGVKGILNFTAARLVAPPEVLIQNVDLTNELQTLIYFLHHDNELIDEEE.

The segment at residues 16 to 55 (LYYRYLRMLHDTGKNKVSSTELSEAVQVDSATIRRDFSYF) is a DNA-binding region (H-T-H motif). Residue 90–95 (GVGNLG) coordinates NAD(+).

It belongs to the transcriptional regulatory Rex family. As to quaternary structure, homodimer.

Its subcellular location is the cytoplasm. Its function is as follows. Modulates transcription in response to changes in cellular NADH/NAD(+) redox state. The sequence is that of Redox-sensing transcriptional repressor Rex 1 from Enterococcus faecalis (strain ATCC 700802 / V583).